The chain runs to 451 residues: Glutamyl-tRNA reductase (451 aa).

Substrate-binding positions include Thr-49–Arg-52, Ser-109, Glu-114–Gln-116, and Gln-120. Cys-50 acts as the Nucleophile in catalysis. NADP(+) is bound at residue Gly-190 to Gly-195.

Belongs to the glutamyl-tRNA reductase family. As to quaternary structure, homodimer.

The enzyme catalyses (S)-4-amino-5-oxopentanoate + tRNA(Glu) + NADP(+) = L-glutamyl-tRNA(Glu) + NADPH + H(+). It functions in the pathway porphyrin-containing compound metabolism; protoporphyrin-IX biosynthesis; 5-aminolevulinate from L-glutamyl-tRNA(Glu): step 1/2. Functionally, catalyzes the NADPH-dependent reduction of glutamyl-tRNA(Glu) to glutamate 1-semialdehyde (GSA). In Mycolicibacterium smegmatis (strain ATCC 700084 / mc(2)155) (Mycobacterium smegmatis), this protein is Glutamyl-tRNA reductase.